Reading from the N-terminus, the 431-residue chain is Adenylosuccinate synthetase (431 aa).

GTP-binding positions include 12-18 (GDEGKGK) and 40-42 (GHT). Asp-13 (proton acceptor) is an active-site residue. The Mg(2+) site is built by Asp-13 and Gly-40. IMP-binding positions include 13–16 (DEGK), 38–41 (NAGH), Thr-129, Arg-143, Gln-224, Thr-239, and Arg-303. Residue His-41 is the Proton donor of the active site. 299 to 305 (VTTGRAR) contributes to the substrate binding site. Residues Arg-305, 331 to 333 (KLD), and 413 to 415 (GVG) contribute to the GTP site.

This sequence belongs to the adenylosuccinate synthetase family. In terms of assembly, homodimer. Requires Mg(2+) as cofactor.

Its subcellular location is the cytoplasm. The catalysed reaction is IMP + L-aspartate + GTP = N(6)-(1,2-dicarboxyethyl)-AMP + GDP + phosphate + 2 H(+). Its pathway is purine metabolism; AMP biosynthesis via de novo pathway; AMP from IMP: step 1/2. In terms of biological role, plays an important role in the de novo pathway of purine nucleotide biosynthesis. Catalyzes the first committed step in the biosynthesis of AMP from IMP. This is Adenylosuccinate synthetase from Mycobacteroides abscessus (strain ATCC 19977 / DSM 44196 / CCUG 20993 / CIP 104536 / JCM 13569 / NCTC 13031 / TMC 1543 / L948) (Mycobacterium abscessus).